The chain runs to 351 residues: Uroporphyrinogen decarboxylase (351 aa).

Substrate is bound by residues 25-29 (RQAGR), Asp74, Tyr151, Ser206, and His325.

This sequence belongs to the uroporphyrinogen decarboxylase family. In terms of assembly, homodimer.

The protein resides in the cytoplasm. It carries out the reaction uroporphyrinogen III + 4 H(+) = coproporphyrinogen III + 4 CO2. The protein operates within porphyrin-containing compound metabolism; protoporphyrin-IX biosynthesis; coproporphyrinogen-III from 5-aminolevulinate: step 4/4. Functionally, catalyzes the decarboxylation of four acetate groups of uroporphyrinogen-III to yield coproporphyrinogen-III. This is Uroporphyrinogen decarboxylase from Chlorobium phaeobacteroides (strain DSM 266 / SMG 266 / 2430).